A 326-amino-acid chain; its full sequence is Eukaryotic translation initiation factor 3 subunit I (326 aa).

5 WD repeats span residues 8–47, 50–89, 145–184, 188–227, and 285–326; these read GHERSITQIKYNREGDLLFSCSKDQKPNVWYSLNGERLGT, GHQGAVWCLDVDWESRKLITGAGDMTTKLWDVEYGTIIAS, MTESKITSMQWGPLDETIITGHDNGNIAIWDVRKGQKVVD, DHAAGINDMQLSKDGTMFVTASRDTTAKLFDSESLMCLKT, and GHFG…NIFE.

The protein belongs to the eIF-3 subunit I family. In terms of assembly, component of the eukaryotic translation initiation factor 3 (eIF-3) complex. The eIF-3 complex interacts with pix.

The protein localises to the cytoplasm. Component of the eukaryotic translation initiation factor 3 (eIF-3) complex, which is involved in protein synthesis of a specialized repertoire of mRNAs and, together with other initiation factors, stimulates binding of mRNA and methionyl-tRNAi to the 40S ribosome. The eIF-3 complex specifically targets and initiates translation of a subset of mRNAs involved in cell proliferation. This is Eukaryotic translation initiation factor 3 subunit I from Drosophila pseudoobscura pseudoobscura (Fruit fly).